Reading from the N-terminus, the 334-residue chain is MEPFSKFFKSFRRYHRFHPLDSSSASDDELAGKYEEHLLMDERLKRETVIFKSRIWILLTITNLIILGITVSMIVTSHCQLYAGKNADLRPISWWSPILDAIEIPTYETTLNGTFFAKPEVSIAREEPGPENDADWEQYETIRTHIVSREDILRLGKDPDTVMRFDNDYWGFGDDAYMVQLDVMHQIHCLNMLRKAAFHDYPGYVPTGAHTDANNTHASRWTHLGHCVDILLQNIQCNANTEVITLAWVEGRTQPWPDFSVNRKCRDFEAIYKWQLENSVDAGKFDRMPIPHDAYVWPAPWENRESELGEKLGKHQKQEGVLGQAGHQHTKRHE.

Residues 55–75 (IWILLTITNLIILGITVSMIV) form a helical membrane-spanning segment. Asn112 is a glycosylation site (N-linked (GlcNAc...) asparagine). Positions 185–189 (HQIHC) match the HXXHC 1 motif. N-linked (GlcNAc...) asparagine glycosylation is present at Asn214. The short motif at 223–227 (HLGHC) is the HXXHC 2 element. The span at 306–318 (SELGEKLGKHQKQ) shows a compositional bias: basic and acidic residues. The segment at 306–334 (SELGEKLGKHQKQEGVLGQAGHQHTKRHE) is disordered.

This sequence belongs to the ustYa family.

It localises to the membrane. It functions in the pathway secondary metabolite biosynthesis. In terms of biological role, ustYa family oxidase; part of the gene cluster that mediates the biosynthesis of the asperipin-2a, a bicyclic peptide that possesses two macrocyclic ether rings consisting of 14- and 17-membered paracyclophans. Within the pathway, aprY is responsible for the synthesis of the bicyclic structure of asperipin-2a. The pathway starts with the processing of the precursor aprA by kexin proteases to produce 11 identical copies of the hexapeptide Phe-Tyr-Tyr-Thr-Gly-Tyr. Macrocyclization of asperipin-2a may accompany an alpha-hydroxylation-dehydration sequence to give an imine, which is readily hydrolyzed to yield putative ketone intermediate. The reductase aprR may be required for the final reduction to yield asperipin-2a. The protein is UstYa family oxidase aprY of Aspergillus flavus (strain ATCC 200026 / FGSC A1120 / IAM 13836 / NRRL 3357 / JCM 12722 / SRRC 167).